The sequence spans 532 residues: Cilia- and flagella-associated protein 97 (532 aa).

Position 19 is a phosphoserine (S19). 5 disordered regions span residues 28-83 (ETNS…PVEN), 116-263 (IPNR…TPDI), 306-333 (KAAK…SLDH), 398-421 (LSRQ…PPKL), and 485-532 (GQYS…TAWL). The segment covering 35 to 49 (KQNDDPKERIDKDTK) has biased composition (basic and acidic residues). Residues 50-63 (NVNSNTGMQTTENY) are compositionally biased toward polar residues. The segment covering 67–82 (KGNERNVKFPPEHPVE) has biased composition (basic and acidic residues). Acidic residues predominate over residues 127–139 (GEDDYYTDGEESS). T133 carries the post-translational modification Phosphothreonine. Residues S138 and S139 each carry the phosphoserine modification. Low complexity-rich tracts occupy residues 170–185 (SSSS…SGSG) and 194–205 (DSHLSDSSPSSK). A Phosphoserine modification is found at S218. Over residues 227 to 239 (IKSTETQPSSTTP) the composition is skewed to polar residues. A Phosphoserine modification is found at S248. A compositionally biased stretch (polar residues) spans 253–263 (TDVSPLSTPDI). Residues 320–329 (SSKSSSVLDS) show a composition bias toward low complexity. S330 is subject to Phosphoserine. Positions 374 to 450 (GKNYSFTREE…ALLKRLEAVK (77 aa)) form a coiled coil. Over residues 493–503 (SRTSSATSGLS) the composition is skewed to polar residues.

The protein belongs to the CFAP97 family.

The protein is Cilia- and flagella-associated protein 97 of Homo sapiens (Human).